A 401-amino-acid chain; its full sequence is Imidazolonepropionase (401 aa).

Residues His66 and His68 each contribute to the Fe(3+) site. 2 residues coordinate Zn(2+): His66 and His68. 3 residues coordinate 4-imidazolone-5-propanoate: Arg75, Tyr138, and His171. Tyr138 provides a ligand contact to N-formimidoyl-L-glutamate. His236 is a Fe(3+) binding site. His236 is a binding site for Zn(2+). Gln239 lines the 4-imidazolone-5-propanoate pocket. Asp311 lines the Fe(3+) pocket. Asp311 serves as a coordination point for Zn(2+). N-formimidoyl-L-glutamate contacts are provided by Asn313 and Gly315. A 4-imidazolone-5-propanoate-binding site is contributed by Thr316.

It belongs to the metallo-dependent hydrolases superfamily. HutI family. Zn(2+) serves as cofactor. The cofactor is Fe(3+).

The protein resides in the cytoplasm. It carries out the reaction 4-imidazolone-5-propanoate + H2O = N-formimidoyl-L-glutamate. It participates in amino-acid degradation; L-histidine degradation into L-glutamate; N-formimidoyl-L-glutamate from L-histidine: step 3/3. Its function is as follows. Catalyzes the hydrolytic cleavage of the carbon-nitrogen bond in imidazolone-5-propanoate to yield N-formimidoyl-L-glutamate. It is the third step in the universal histidine degradation pathway. This is Imidazolonepropionase from Pseudomonas putida (strain GB-1).